Here is a 137-residue protein sequence, read N- to C-terminus: F420H(2)-dependent biliverdin reductase (137 aa).

Residues 36 to 41, 54 to 55, 60 to 61, arginine 67, and 78 to 81 contribute to the coenzyme F420-(gamma-Glu)n site; these read HVVAVG, IT, QK, and GARW.

The protein belongs to the F420H(2)-dependent biliverdin reductase family. As to quaternary structure, homodimer.

The protein resides in the cell surface. The protein localises to the secreted. It carries out the reaction (4Z,15Z)-bilirubin IXalpha + oxidized coenzyme F420-(gamma-L-Glu)(n) + H(+) = biliverdin IXalpha + reduced coenzyme F420-(gamma-L-Glu)(n). Catalyzes the F420H(2)-dependent reduction of biliverdin-IXalpha at C10 position, leading to bilirubin-IXalpha, a potent antioxidant. As biliverdin-IXalpha is produced in high amounts in macrophages infected with M.tuberculosis, its reduction by Rv2074 may play a role in protecting mycobacteria against oxidative stress, aiding the persistence of M.tuberculosis infection. In Mycobacterium tuberculosis (strain CDC 1551 / Oshkosh), this protein is F420H(2)-dependent biliverdin reductase.